The chain runs to 165 residues: MAGRLDEDLKDVTLLGNQNTKYLFEYSPEILETFDNNHPNRDYFVKFNCPEFTSLCPKTGQPDFATIYISYIPEKKMVESKSLKLYLFSFRNHGDFHEDCMNVIMNDLIELMDPRYIEVWGKFTPRGGISIDPYCNYGRPGTKYEKMAEYRMMNHDLYPETVDNR.

The Thioimide intermediate role is filled by Cys-56. Asp-63 (proton donor) is an active-site residue. Substrate-binding positions include Val-78–Ser-80 and His-97–Glu-98.

The protein belongs to the GTP cyclohydrolase I family. QueF type 1 subfamily.

It is found in the cytoplasm. The enzyme catalyses 7-aminomethyl-7-carbaguanine + 2 NADP(+) = 7-cyano-7-deazaguanine + 2 NADPH + 3 H(+). It functions in the pathway tRNA modification; tRNA-queuosine biosynthesis. In terms of biological role, catalyzes the NADPH-dependent reduction of 7-cyano-7-deazaguanine (preQ0) to 7-aminomethyl-7-deazaguanine (preQ1). This chain is NADPH-dependent 7-cyano-7-deazaguanine reductase, found in Bacillus cytotoxicus (strain DSM 22905 / CIP 110041 / 391-98 / NVH 391-98).